The sequence spans 41 residues: Large ribosomal subunit protein bL36 (41 aa).

Belongs to the bacterial ribosomal protein bL36 family.

This Maricaulis maris (strain MCS10) (Caulobacter maris) protein is Large ribosomal subunit protein bL36.